The chain runs to 430 residues: tRNA(Ile)-lysidine synthase (430 aa).

21–26 (SGGLDS) lines the ATP pocket.

This sequence belongs to the tRNA(Ile)-lysidine synthase family.

It is found in the cytoplasm. It catalyses the reaction cytidine(34) in tRNA(Ile2) + L-lysine + ATP = lysidine(34) in tRNA(Ile2) + AMP + diphosphate + H(+). Functionally, ligates lysine onto the cytidine present at position 34 of the AUA codon-specific tRNA(Ile) that contains the anticodon CAU, in an ATP-dependent manner. Cytidine is converted to lysidine, thus changing the amino acid specificity of the tRNA from methionine to isoleucine. In Salmonella paratyphi A (strain ATCC 9150 / SARB42), this protein is tRNA(Ile)-lysidine synthase.